The chain runs to 687 residues: DNA-directed RNA polymerase subunit beta' (687 aa).

Residues Cys-69, Cys-71, Cys-87, and Cys-90 each contribute to the Zn(2+) site. Asp-495, Asp-497, and Asp-499 together coordinate Mg(2+).

It belongs to the RNA polymerase beta' chain family. RpoC1 subfamily. As to quaternary structure, in plastids the minimal PEP RNA polymerase catalytic core is composed of four subunits: alpha, beta, beta', and beta''. When a (nuclear-encoded) sigma factor is associated with the core the holoenzyme is formed, which can initiate transcription. Requires Mg(2+) as cofactor. Zn(2+) is required as a cofactor.

The protein localises to the plastid. It is found in the chloroplast. It carries out the reaction RNA(n) + a ribonucleoside 5'-triphosphate = RNA(n+1) + diphosphate. Functionally, DNA-dependent RNA polymerase catalyzes the transcription of DNA into RNA using the four ribonucleoside triphosphates as substrates. This chain is DNA-directed RNA polymerase subunit beta', found in Solanum tuberosum (Potato).